The primary structure comprises 699 residues: DNA ligase (699 aa).

Residues 1–29 form a disordered region; that stretch reads MSDADVDAESNPYLRDPPTEFEPAESLSR. Residues 60-64, 108-109, and E137 each bind NAD(+); these read DAAYD and SI. K139 functions as the N6-AMP-lysine intermediate in the catalytic mechanism. NAD(+)-binding residues include R160, E196, K311, and K335. Zn(2+)-binding residues include C425, C428, C441, and C447. The BRCT domain maps to 613–666; the sequence is SGGDELDGLTFVVTGTLAASRSDVTELVESHGGNVTGSVSGNTDYLVVGENPGR.

Belongs to the NAD-dependent DNA ligase family. LigA subfamily. The cofactor is Mg(2+). Mn(2+) serves as cofactor.

It catalyses the reaction NAD(+) + (deoxyribonucleotide)n-3'-hydroxyl + 5'-phospho-(deoxyribonucleotide)m = (deoxyribonucleotide)n+m + AMP + beta-nicotinamide D-nucleotide.. With respect to regulation, displays maximal in vitro activity at high salt levels. In terms of biological role, DNA ligase that catalyzes the formation of phosphodiester linkages between 5'-phosphoryl and 3'-hydroxyl groups in double-stranded DNA using NAD as a coenzyme and as the energy source for the reaction. It is essential for DNA replication and repair of damaged DNA. This Haloferax volcanii (strain ATCC 29605 / DSM 3757 / JCM 8879 / NBRC 14742 / NCIMB 2012 / VKM B-1768 / DS2) (Halobacterium volcanii) protein is DNA ligase.